Reading from the N-terminus, the 911-residue chain is Facilitated trehalose transporter Tret1 (911 aa).

A disordered region spans residues 1–256; the sequence is MSGRDNRGAG…RIGFQQQKAT (256 aa). The Cytoplasmic portion of the chain corresponds to 1–446; it reads MSGRDNRGAG…VYRPTTNPIY (446 aa). Positions 8 to 19 are enriched in gly residues; that stretch reads GAGGGGGGGGGG. Over residues 32-50 the composition is skewed to basic and acidic residues; the sequence is KLKEKLTRAGEELGYHRVE. 3 stretches are compositionally biased toward low complexity: residues 51–64, 76–129, and 156–166; these read SNLS…SLDT, AAPQ…QQLR, and QQIHVQQQQQQ. A phosphoserine mark is found at Ser-302, Ser-303, and Ser-304. The segment at 334-355 is disordered; that stretch reads VLQGSSTDSDEEGDDAEHKRLI. Ser-374 and Ser-376 each carry phosphoserine. The segment at 380-402 is disordered; it reads FLTSRQNFQQQRSISTDSRKSRR. A compositionally biased stretch (polar residues) spans 384–395; it reads RQNFQQQRSIST. The helical transmembrane segment at 447–467 threads the bilayer; that stretch reads IWTQVLAALSVSLGSLVVGFA. Residues 468 to 494 lie on the Extracellular side of the membrane; the sequence is SAYTSPALVSMTNTNLTSFVVTPQAAS. N-linked (GlcNAc...) asparagine glycosylation occurs at Asn-482. The helical transmembrane segment at 495–515 threads the bilayer; sequence WVGGIMPLAGLAGGIAGGPFI. Residues 516–527 are Cytoplasmic-facing; it reads EYLGRRNTILAT. Residues 528 to 548 form a helical membrane-spanning segment; it reads AVPFIVSWLLIACAVNVIMVL. Topologically, residues 549-551 are extracellular; that stretch reads CGR. Residues 552–572 form a helical membrane-spanning segment; it reads FLAGFCVGIASLSLPVYLGET. Topologically, residues 573-578 are cytoplasmic; the sequence is VQPEVR. A helical transmembrane segment spans residues 579-599; sequence GTLGLLPTAFGNIGILLCFVA. Topologically, residues 600–606 are extracellular; that stretch reads GTYMDWS. Residues 607–627 form a helical membrane-spanning segment; it reads MLAFLGASLPVPFLILMFLIP. The Cytoplasmic portion of the chain corresponds to 628–690; sequence ETPRWYVSRG…ELLKRSNLKP (63 aa). The helical transmembrane segment at 691–711 threads the bilayer; the sequence is LSISLGLMFFQQLSGINAVIF. The Extracellular portion of the chain corresponds to 712–727; the sequence is YTVQIFQDAGSTIDGN. Residues 728–748 form a helical membrane-spanning segment; it reads VCTIIVGVVNFAATFIATILI. Topologically, residues 749-754 are cytoplasmic; that stretch reads DRAGRK. Residues 755–775 traverse the membrane as a helical segment; it reads VLLYVSNVMMVLTLFVLGGFF. The Extracellular portion of the chain corresponds to 776 to 794; it reads YCKSSGMDTSNVGWLPLSC. The chain crosses the membrane as a helical span at residues 795–815; that stretch reads FVIYILGFSLGFGPIPWLMMG. At 816–821 the chain is on the cytoplasmic side; the sequence is EILPAK. The chain crosses the membrane as a helical span at residues 822-842; that stretch reads IRGSAASVATAFNWSCTFVVT. The Extracellular segment spans residues 843-855; the sequence is KSFQDMIDFMGAH. The chain crosses the membrane as a helical span at residues 856–876; the sequence is GAFWMFGAICFIGLFFVIFYV. Over 877–911 the chain is Cytoplasmic; the sequence is PETQGKTLEDIERKMMGRVRRMSSVANIKPLSFNM. 2 positions are modified to phosphoserine: Ser-899 and Ser-900.

Belongs to the major facilitator superfamily. Sugar transporter (TC 2.A.1.1) family. Trehalose transporter subfamily.

It localises to the cell membrane. Low-capacity facilitative transporter for trehalose. Does not transport maltose, sucrose or lactose. Mediates the bidirectional transfer of trehalose. Responsible for the transport of trehalose synthesized in the fat body and the incorporation of trehalose into other tissues that require a carbon source, thereby regulating trehalose levels in the hemolymph. This Drosophila virilis (Fruit fly) protein is Facilitated trehalose transporter Tret1.